A 227-amino-acid chain; its full sequence is PKHD-type hydroxylase Bamb_4479 (227 aa).

The Fe2OG dioxygenase domain occupies 80–179 (QVYPPLFNRY…RVASFFWVQS (100 aa)). Residues His98, Asp100, and His160 each coordinate Fe cation. Residue Arg170 coordinates 2-oxoglutarate.

The cofactor is Fe(2+). Requires L-ascorbate as cofactor.

This chain is PKHD-type hydroxylase Bamb_4479, found in Burkholderia ambifaria (strain ATCC BAA-244 / DSM 16087 / CCUG 44356 / LMG 19182 / AMMD) (Burkholderia cepacia (strain AMMD)).